Consider the following 780-residue polypeptide: Probable trehalase (780 aa).

Residues 1–48 (MVDFLPKVTEINPPSEGNDGEDNIKPLSSGSEQRPLKEEGQQGGRRHH) are disordered. A phosphoserine mark is found at S52 and S53. Position 88 is a phosphothreonine (T88). S112 bears the Phosphoserine mark. Residues R331, 338–339 (WD), N375, R384, 384–386 (RSQ), and G505 contribute to the substrate site. Residues D507 and E703 each act as proton donor/acceptor in the active site.

Belongs to the glycosyl hydrolase 37 family.

The catalysed reaction is alpha,alpha-trehalose + H2O = alpha-D-glucose + beta-D-glucose. The protein is Probable trehalase (NTH2) of Saccharomyces cerevisiae (strain ATCC 204508 / S288c) (Baker's yeast).